The sequence spans 219 residues: Cytidylate kinase (219 aa).

11-19 (GPAGVGKTT) serves as a coordination point for ATP.

Belongs to the cytidylate kinase family. Type 1 subfamily.

It is found in the cytoplasm. It catalyses the reaction CMP + ATP = CDP + ADP. The catalysed reaction is dCMP + ATP = dCDP + ADP. The chain is Cytidylate kinase from Oleidesulfovibrio alaskensis (strain ATCC BAA-1058 / DSM 17464 / G20) (Desulfovibrio alaskensis).